Consider the following 391-residue polypeptide: Putative 8-amino-7-oxononanoate synthase (391 aa).

2 residues coordinate substrate: arginine 22 and histidine 135. Pyridoxal 5'-phosphate-binding positions include serine 183, 208-211, and 239-242; these read DDAH and TLSK. The residue at position 242 (lysine 242) is an N6-(pyridoxal phosphate)lysine. Threonine 358 contacts substrate.

The protein belongs to the class-II pyridoxal-phosphate-dependent aminotransferase family. BioF subfamily. In terms of assembly, homodimer. Requires pyridoxal 5'-phosphate as cofactor.

The catalysed reaction is 6-carboxyhexanoyl-[ACP] + L-alanine + H(+) = (8S)-8-amino-7-oxononanoate + holo-[ACP] + CO2. Its pathway is cofactor biosynthesis; biotin biosynthesis. In terms of biological role, catalyzes the decarboxylative condensation of pimeloyl-[acyl-carrier protein] and L-alanine to produce 8-amino-7-oxononanoate (AON), [acyl-carrier protein], and carbon dioxide. The polypeptide is Putative 8-amino-7-oxononanoate synthase (bioF) (Thermosynechococcus vestitus (strain NIES-2133 / IAM M-273 / BP-1)).